The primary structure comprises 221 residues: Serotriflin (221 aa).

Residues 19–147 (LDKHNALRRS…SYNYYYVCHY (129 aa)) form the SCP domain. Asn48 carries an N-linked (GlcNAc...) asparagine glycan. Cystine bridges form between Cys56–Cys134, Cys73–Cys148, Cys129–Cys145, Cys167–Cys174, Cys170–Cys179, Cys183–Cys216, Cys192–Cys210, and Cys201–Cys214. The 34-residue stretch at 183–216 (CKHVDRYSNCNSLVQQISCQSNNMNTDCPASCFC) folds into the ShKT domain.

Forms a stable, non-covalent complex with SSP-2.

The protein resides in the secreted. This chain is Serotriflin, found in Protobothrops flavoviridis (Habu).